The primary structure comprises 250 residues: Carboxy-S-adenosyl-L-methionine synthase (250 aa).

S-adenosyl-L-methionine-binding positions include Tyr-45, 70 to 72 (GCS), 95 to 96 (DN), 123 to 124 (DI), Asn-138, and Arg-205.

The protein belongs to the class I-like SAM-binding methyltransferase superfamily. Cx-SAM synthase family. Homodimer.

The catalysed reaction is prephenate + S-adenosyl-L-methionine = carboxy-S-adenosyl-L-methionine + 3-phenylpyruvate + H2O. Its function is as follows. Catalyzes the conversion of S-adenosyl-L-methionine (SAM) to carboxy-S-adenosyl-L-methionine (Cx-SAM). The chain is Carboxy-S-adenosyl-L-methionine synthase from Marinobacter nauticus (strain ATCC 700491 / DSM 11845 / VT8) (Marinobacter aquaeolei).